The primary structure comprises 231 residues: LexA repressor (231 aa).

The segment at residues Ile28–Lys48 is a DNA-binding region (H-T-H motif). Active-site for autocatalytic cleavage activity residues include Ser149 and Lys186.

This sequence belongs to the peptidase S24 family. Homodimer.

The enzyme catalyses Hydrolysis of Ala-|-Gly bond in repressor LexA.. Its function is as follows. Represses a number of genes involved in the response to DNA damage (SOS response), including recA and lexA. In the presence of single-stranded DNA, RecA interacts with LexA causing an autocatalytic cleavage which disrupts the DNA-binding part of LexA, leading to derepression of the SOS regulon and eventually DNA repair. This Anaeromyxobacter sp. (strain Fw109-5) protein is LexA repressor.